The sequence spans 259 residues: Tubulin-specific chaperone C (259 aa).

The 130-residue stretch at 112 to 241 (PEVYFENDTL…DEHPILDFTW (130 aa)) folds into the C-CAP/cofactor C-like domain.

The protein belongs to the TBCC family.

The protein resides in the cytoplasm. It localises to the cytoskeleton. Tubulin-folding protein; involved in the final step of the tubulin folding pathway. The polypeptide is Tubulin-specific chaperone C (cin2) (Schizosaccharomyces pombe (strain 972 / ATCC 24843) (Fission yeast)).